Consider the following 456-residue polypeptide: Crinkler effector protein 2 (456 aa).

An N-terminal signal peptide occupies residues 1 to 17 (MVKLVCAIVGVAGSAFP). Positions 18-54 (VDTDASQLVGDLKKAIKAENAMTFTGDAKDLQLFLAK) are LQLFLAK domain. Positions 55–136 (QPVDDESGKE…NMELPSSEQI (82 aa)) are DWL domain. The HVLVXXP motif motif lies at 137 to 143 (HVLVVVP). N-linked (GlcNAc...) asparagine glycosylation occurs at N338.

This sequence belongs to the Crinkler effector family.

Its subcellular location is the secreted. The protein localises to the host nucleus. Secreted effector that effector that induces cell death when expressed in host plants. Induces the expression of defense response genes in tomato. This chain is Crinkler effector protein 2, found in Phytophthora infestans (Potato late blight agent).